The chain runs to 471 residues: MTDLPDSTRWQLWIVAFGFFMQSLDTTIVNTALPSMAQSLGESPLHMHMVIVSYVLTVAVMLPASGWLADKVGVRNIFFTAIVLFTLGSLFCALSGTLNELLLARALQGVGGAMMVPVGRLTVMKIVPREQYMAAMTFVTLPGQVGPLLGPALGGLLVEYASWHWIFLINIPVGIIGAIATLMLMPNYTMQTRRFDLSGFLLLAVGMAVLTLALDGSKGTGLSPLAIAGLVAVGVVALVLYLLHARNNNRALFSLKLFRTRTFSLGLAGSFAGRIGSGMLPFMTPVFLQIGLGFSPFHAGLMMIPMVLGSMGMKRIVVQVVNRFGYRRVLVATTLGLSLVTMLFMTTALLGWYYVLPFVLFLQGMVNSTRFSSMNTLTLKDLPDNLASSGNSLLSMIMQLSMSIGVTIAGLLLGLFGSQHVSVDSGTTQTVFMYTWLSMAFIIALPAFIFARVPNDTHQNVAISRRKRSAQ.

The Periplasmic portion of the chain corresponds to 1-11; that stretch reads MTDLPDSTRWQ. Residues 12-32 traverse the membrane as a helical segment; that stretch reads LWIVAFGFFMQSLDTTIVNTA. Topologically, residues 33 to 48 are cytoplasmic; the sequence is LPSMAQSLGESPLHMH. Residues 49-69 traverse the membrane as a helical segment; sequence MVIVSYVLTVAVMLPASGWLA. Residues 70–76 lie on the Periplasmic side of the membrane; it reads DKVGVRN. Residues 77 to 97 traverse the membrane as a helical segment; that stretch reads IFFTAIVLFTLGSLFCALSGT. Over 98 to 101 the chain is Cytoplasmic; that stretch reads LNEL. The helical transmembrane segment at 102 to 124 threads the bilayer; sequence LLARALQGVGGAMMVPVGRLTVM. Topologically, residues 125 to 137 are periplasmic; the sequence is KIVPREQYMAAMT. Residues 138-158 traverse the membrane as a helical segment; the sequence is FVTLPGQVGPLLGPALGGLLV. At 159–164 the chain is on the cytoplasmic side; sequence EYASWH. A helical membrane pass occupies residues 165 to 185; it reads WIFLINIPVGIIGAIATLMLM. Residues 186–196 lie on the Periplasmic side of the membrane; that stretch reads PNYTMQTRRFD. The chain crosses the membrane as a helical span at residues 197–217; that stretch reads LSGFLLLAVGMAVLTLALDGS. The Cytoplasmic portion of the chain corresponds to 218-224; the sequence is KGTGLSP. A helical membrane pass occupies residues 225-245; that stretch reads LAIAGLVAVGVVALVLYLLHA. Over 246–262 the chain is Periplasmic; sequence RNNNRALFSLKLFRTRT. A helical transmembrane segment spans residues 263–283; the sequence is FSLGLAGSFAGRIGSGMLPFM. Over 284 to 285 the chain is Cytoplasmic; that stretch reads TP. A helical transmembrane segment spans residues 286–306; sequence VFLQIGLGFSPFHAGLMMIPM. Residues 307–341 are Periplasmic-facing; that stretch reads VLGSMGMKRIVVQVVNRFGYRRVLVATTLGLSLVT. A helical membrane pass occupies residues 342-362; the sequence is MLFMTTALLGWYYVLPFVLFL. Over 363-395 the chain is Cytoplasmic; it reads QGMVNSTRFSSMNTLTLKDLPDNLASSGNSLLS. A helical membrane pass occupies residues 396 to 416; the sequence is MIMQLSMSIGVTIAGLLLGLF. The Periplasmic portion of the chain corresponds to 417-430; it reads GSQHVSVDSGTTQT. A helical transmembrane segment spans residues 431–451; sequence VFMYTWLSMAFIIALPAFIFA. Residues 452 to 471 are Cytoplasmic-facing; sequence RVPNDTHQNVAISRRKRSAQ.

The protein belongs to the major facilitator superfamily. TCR/Tet family.

Its subcellular location is the cell inner membrane. This Escherichia coli O7:K1 (strain IAI39 / ExPEC) protein is Putative multidrug resistance protein MdtD.